The following is a 480-amino-acid chain: Glutamyl-tRNA(Gln) amidotransferase subunit A (480 aa).

Active-site charge relay system residues include K74 and S149. S173 (acyl-ester intermediate) is an active-site residue.

The protein belongs to the amidase family. GatA subfamily. Heterotrimer of A, B and C subunits.

The enzyme catalyses L-glutamyl-tRNA(Gln) + L-glutamine + ATP + H2O = L-glutaminyl-tRNA(Gln) + L-glutamate + ADP + phosphate + H(+). Its function is as follows. Allows the formation of correctly charged Gln-tRNA(Gln) through the transamidation of misacylated Glu-tRNA(Gln) in organisms which lack glutaminyl-tRNA synthetase. The reaction takes place in the presence of glutamine and ATP through an activated gamma-phospho-Glu-tRNA(Gln). The protein is Glutamyl-tRNA(Gln) amidotransferase subunit A of Vesicomyosocius okutanii subsp. Calyptogena okutanii (strain HA).